A 149-amino-acid chain; its full sequence is Arginine repressor (149 aa).

Belongs to the ArgR family.

It is found in the cytoplasm. Its pathway is amino-acid biosynthesis; L-arginine biosynthesis [regulation]. Functionally, regulates arginine biosynthesis genes. The protein is Arginine repressor of Alkaliphilus oremlandii (strain OhILAs) (Clostridium oremlandii (strain OhILAs)).